The primary structure comprises 336 residues: Tetraacyldisaccharide 4'-kinase (336 aa).

60–67 (TVGGTGKT) is a binding site for ATP.

This sequence belongs to the LpxK family.

It catalyses the reaction a lipid A disaccharide + ATP = a lipid IVA + ADP + H(+). The protein operates within glycolipid biosynthesis; lipid IV(A) biosynthesis; lipid IV(A) from (3R)-3-hydroxytetradecanoyl-[acyl-carrier-protein] and UDP-N-acetyl-alpha-D-glucosamine: step 6/6. In terms of biological role, transfers the gamma-phosphate of ATP to the 4'-position of a tetraacyldisaccharide 1-phosphate intermediate (termed DS-1-P) to form tetraacyldisaccharide 1,4'-bis-phosphate (lipid IVA). The polypeptide is Tetraacyldisaccharide 4'-kinase (Pseudomonas fluorescens (strain Pf0-1)).